The following is a 119-amino-acid chain: Large ribosomal subunit protein uL14 (119 aa).

Belongs to the universal ribosomal protein uL14 family. As to quaternary structure, part of the 50S ribosomal subunit. Forms a cluster with proteins L3 and L19. In the 70S ribosome, L14 and L19 interact and together make contacts with the 16S rRNA in bridges B5 and B8.

Its function is as follows. Binds to 23S rRNA. Forms part of two intersubunit bridges in the 70S ribosome. This Ehrlichia ruminantium (strain Gardel) protein is Large ribosomal subunit protein uL14.